A 108-amino-acid chain; its full sequence is Protein YcgL (108 aa).

Positions 12 to 96 constitute a YcgL domain; that stretch reads MFCVIYRSSK…PPEDLLKQHL (85 aa).

This Escherichia coli O127:H6 (strain E2348/69 / EPEC) protein is Protein YcgL.